Reading from the N-terminus, the 303-residue chain is Glycine--tRNA ligase alpha subunit (303 aa).

This sequence belongs to the class-II aminoacyl-tRNA synthetase family. Tetramer of two alpha and two beta subunits.

Its subcellular location is the cytoplasm. The enzyme catalyses tRNA(Gly) + glycine + ATP = glycyl-tRNA(Gly) + AMP + diphosphate. The chain is Glycine--tRNA ligase alpha subunit from Streptococcus equi subsp. equi (strain 4047).